A 512-amino-acid polypeptide reads, in one-letter code: UDP-N-acetylmuramate--L-alanine ligase (512 aa).

132–138 (GAHGKTT) is an ATP binding site.

This sequence belongs to the MurCDEF family.

The protein resides in the cytoplasm. The enzyme catalyses UDP-N-acetyl-alpha-D-muramate + L-alanine + ATP = UDP-N-acetyl-alpha-D-muramoyl-L-alanine + ADP + phosphate + H(+). The protein operates within cell wall biogenesis; peptidoglycan biosynthesis. In terms of biological role, cell wall formation. This Bifidobacterium longum subsp. infantis (strain ATCC 15697 / DSM 20088 / JCM 1222 / NCTC 11817 / S12) protein is UDP-N-acetylmuramate--L-alanine ligase.